We begin with the raw amino-acid sequence, 96 residues long: Neutrophil defensin 8 (96 aa).

The signal sequence occupies residues 1 to 19; that stretch reads MRTLVILAAILLVALQAQA. The propeptide occupies 20–66; it reads EPLQARTDEATAAQEQIPTDNPEVVVSLAWDESLAPKDSVPGLRKNM. Intrachain disulfides connect cysteine 68/cysteine 96, cysteine 70/cysteine 85, and cysteine 75/cysteine 95.

It belongs to the alpha-defensin family.

It localises to the secreted. Its function is as follows. Probable antibiotic and antifungal activity. The sequence is that of Neutrophil defensin 8 from Macaca mulatta (Rhesus macaque).